The sequence spans 876 residues: Leucine--tRNA ligase (876 aa).

The 'HIGH' region signature appears at 43 to 53; that stretch reads PYPSGRIHMGH. Residues 632–636 carry the 'KMSKS' region motif; that stretch reads KMSKS. Lys635 serves as a coordination point for ATP.

The protein belongs to the class-I aminoacyl-tRNA synthetase family.

It localises to the cytoplasm. The enzyme catalyses tRNA(Leu) + L-leucine + ATP = L-leucyl-tRNA(Leu) + AMP + diphosphate. The chain is Leucine--tRNA ligase from Rhodopseudomonas palustris (strain TIE-1).